The primary structure comprises 108 residues: Protein Asterix (108 aa).

The interval 1–29 (MNMTVDPRRKEKINRYKAPKNQGQSGGAN) is disordered. A helical transmembrane segment spans residues 80–96 (VLSSFMLSVSAVVMSYL).

The protein belongs to the Asterix family.

The protein localises to the membrane. The protein is Protein Asterix of Drosophila melanogaster (Fruit fly).